Consider the following 336-residue polypeptide: Probable carboxylesterase 6 (336 aa).

The tract at residues 1–20 (MGGTKLTHVTTTNPNNSNIH) is disordered. Polar residues predominate over residues 7 to 19 (THVTTTNPNNSNI). Positions 96 to 98 (HGG) match the Involved in the stabilization of the negatively charged intermediate by the formation of the oxyanion hole motif. Active-site residues include serine 176, aspartate 276, and histidine 303.

Belongs to the 'GDXG' lipolytic enzyme family. Expressed in roots, leaves, flowers and siliques.

It carries out the reaction a carboxylic ester + H2O = an alcohol + a carboxylate + H(+). Functionally, carboxylesterase acting on esters with varying acyl chain length. This is Probable carboxylesterase 6 (CXE6) from Arabidopsis thaliana (Mouse-ear cress).